A 66-amino-acid chain; its full sequence is Conotoxin Cl14.1a (66 aa).

An N-terminal signal peptide occupies residues 1–19 (MNVTAMFIVLLLTMPLTDG). Residues 20–49 (FNIRAINGGELFGLVQRDAGNALDHGFYRR) constitute a propeptide that is removed on maturation.

This sequence belongs to the conotoxin L superfamily. Post-translationally, contains 2 disulfide bonds. As to expression, expressed by the venom duct.

It is found in the secreted. Its function is as follows. Probable neurotoxin with unknown target. Possibly targets ion channels. This peptide could be considered as an apoptosis activator in some cancers (tested on lung and breast cancer cell lines). Provokes the decrease of H1299 lung cancer cells viability after 24 hours treatment, and induces a high Bax/Bcl-2 ratio, which suggests that this peptide can activate apoptosis in H1299 cells. In addition, H1299 and H1437 lung cancer cell lines treated with this peptide have decreased cell viability, activated caspases, and reduced expression of the pro-survival protein NF-kappa-B (NFKB1), indicating activation of apoptosis. In synergy with MicroRNA-101-3p, this synthetic peptide inhibits breast cancer cells (SK-BR-3 and MCF-7) migration, invasion, and proliferation through suppressing the expression of the methyltransferase EZH2. In parallel, this synergy treatment is able to promote the apoptosis of breast cancer cells. Against microbes, this synthetic toxin (at micromolar concentrations) lowers viability and inhibits host cell invasion by the opportunistic parasite Toxoplasma gondii (tachyzoite form). In addition, it permits T.gondii intracellular replication to decrease while viability of the host cell is unaffected. This Californiconus californicus (California cone) protein is Conotoxin Cl14.1a.